A 583-amino-acid polypeptide reads, in one-letter code: Isocitrate dehydrogenase kinase/phosphatase (583 aa).

ATP-binding positions include 315–321 and Lys-336; that span reads APGIRGM. Residue Asp-371 is part of the active site.

The protein belongs to the AceK family.

It is found in the cytoplasm. It carries out the reaction L-seryl-[isocitrate dehydrogenase] + ATP = O-phospho-L-seryl-[isocitrate dehydrogenase] + ADP + H(+). Bifunctional enzyme which can phosphorylate or dephosphorylate isocitrate dehydrogenase (IDH) on a specific serine residue. This is a regulatory mechanism which enables bacteria to bypass the Krebs cycle via the glyoxylate shunt in response to the source of carbon. When bacteria are grown on glucose, IDH is fully active and unphosphorylated, but when grown on acetate or ethanol, the activity of IDH declines drastically concomitant with its phosphorylation. The polypeptide is Isocitrate dehydrogenase kinase/phosphatase (Salmonella dublin (strain CT_02021853)).